The chain runs to 294 residues: MTTIAFLGLGNMGAPMSANLVGAGHVVRGFDPAPTAASGAAAHGVAVFRSAPEAVAEADVVITMLPTGEVVRRCYTDVLAAARPATLFIDSSTISVTDAREVHALAESHGMLQLDAPVSGGVKGAAAATLAFMVGGDESTLRRARPVLEPMAGKIIHCGAAGAGQAAKVCNNMVLAVQQIAIAEAFVLAEKLGLSAQSLFDVITGATGNCWAVHTNCPVPGPVPTSPANNDFKPGFSTALMNKDLGLAMDAVAATGATAPLGSHAADIYAKFAADHADLDFSAVIHTLRARADA.

NAD(+) is bound by residues 3–31 (TIAF…RGFD) and threonine 93. Residue lysine 168 is part of the active site. Lysine 243 lines the NAD(+) pocket.

The protein belongs to the HIBADH-related family.

It catalyses the reaction 3-hydroxy-2-methylpropanoate + NAD(+) = 2-methyl-3-oxopropanoate + NADH + H(+). It functions in the pathway amino-acid degradation; L-valine degradation. This is Probable 3-hydroxyisobutyrate dehydrogenase (mmsB) from Mycobacterium bovis (strain ATCC BAA-935 / AF2122/97).